Consider the following 37-residue polypeptide: Non-structural protein 6 (37 aa).

This sequence belongs to the rotavirus A NSP6 family. As to quaternary structure, interacts with NSP2 and NSP5.

The protein resides in the host cytoplasm. Its subcellular location is the host mitochondrion. This Rotavirus A (strain RVA/Human/United States/D/1974/G1P1A[8]) (RV-A) protein is Non-structural protein 6.